The chain runs to 80 residues: uncharacterized protein (80 aa).

This is an uncharacterized protein from Homo sapiens (Human).